We begin with the raw amino-acid sequence, 139 residues long: Protein 2.8 (139 aa).

This Escherichia phage T7 (Bacteriophage T7) protein is Protein 2.8.